The chain runs to 98 residues: MSCFDLCRPCGPTPLANSCNEACVRQCQDSRVVIQPSPVVVTLPGPILSSFPQNTLVGSSTSAAVGSILSEEGVPISSGGFGISGLGSRFSGRRCLPC.

It belongs to the avian keratin family. As to quaternary structure, the avian keratins (F-ker, S-ker, C-ker and B-ker) are a complex mixture of very similar polypeptides.

This Gallus gallus (Chicken) protein is Feather keratin 3.